A 504-amino-acid polypeptide reads, in one-letter code: CDK5 regulatory subunit-associated protein 3 (504 aa).

Short sequence motifs (shuffled ATG8-binding motif) lie at residues 266–269 (IDWG), 290–293 (IDWG), and 308–311 (IDWG). The segment at 268-504 (WGDFGLEAVS…RPVNLMGTSV (237 aa)) is required for interaction with UFL1 and mediates interaction with CHEK1. Residues 353–368 (DELMELEIFLSQRAVE) form an RPL10a-binding domain (RBD) region. A Glycyl lysine isopeptide (Lys-Gly) (interchain with G-Cter in SUMO2) cross-link involves residue Lys-448.

The protein belongs to the CDK5RAP3 family. As to quaternary structure, substrate adapter component of the UFM1 ribosome E3 ligase (UREL) complex, composed of UFL1, DDRGK1 and CDK5RAP3. Interaction with UFL1 anchors CDK5RAP3 in the cytoplasm, preventing its translocation to the nucleus which allows expression of the CCND1 cyclin and progression of cells through the G1/S transition. Interacts with ATG8 family proteins MAP1LC3A, MAP1LC3B, GABARAP, GABARAPL1 and GABARAPL2. Interacts with CDK5R1; competes with CDK5RAP1 and CDK5RAP2. Interacts with RELA. Interacts with CHEK1; may negatively regulate CHEK1 and thereby stimulate entry into mitosis. Interacts with CDKN2A/ARF and MDM2; forms a ternary complex involved in regulation of p53/TP53. Interacts with MAPK14. Interacts with CCNB1. Interacts with TUBG1; may regulate CDK5RAP3 in mitotic G2/M transition checkpoint. In terms of processing, may be phosphorylated by CDK5. Post-translationally, ubiquitinated. Probably triggers proteasomal degradation and is negatively regulated by UFL1. May be ufmylated. In terms of processing, cleaved by caspases early during apoptosis, the resulting peptides may play a role in rupture of the nuclear envelope. As to expression, expressed in vascular endothelium. Up-regulated in failing heart. Highly expressed in the ventricular section in subacute and chronic ischemic heart failure.

The protein localises to the endoplasmic reticulum membrane. The protein resides in the cytoplasm. Its subcellular location is the nucleus. It localises to the cytoskeleton. It is found in the microtubule organizing center. The protein localises to the centrosome. Its function is as follows. Substrate adapter of E3 ligase complexes mediating ufmylation, the covalent attachment of the ubiquitin-like modifier UFM1 to substrate proteins, and which is involved in various processes, such as ribosome recycling and reticulophagy (also called ER-phagy). As part of the UREL complex, plays a key role in ribosome recycling by promoting mono-ufmylation of RPL26/uL24 subunit of the 60S ribosome. Ufmylation of RPL26/uL24 occurs on free 60S ribosomes following ribosome dissociation: it weakens the junction between post-termination 60S subunits and SEC61 translocons, promoting release and recycling of the large ribosomal subunit from the endoplasmic reticulum membrane. Ufmylation of RPL26/uL24 and subsequent 60S ribosome recycling either take place after normal termination of translation or after ribosome stalling during cotranslational translocation at the endoplasmic reticulum. Within the UREL complex, CDK5RAP3 acts as a substrate adapter that constrains UFL1 ligase activity to mono-ufmylate RPL26/uL24 at 'Lys-134'. The UREL complex is also involved in reticulophagy in response to endoplasmic reticulum stress by promoting ufmylation of proteins such as CYB5R3, thereby promoting lysosomal degradation of ufmylated proteins. Also acts as a regulator of transcription: negatively regulates NF-kappa-B-mediated gene transcription through the control of RELA phosphorylation. Also regulates mitotic G2/M transition checkpoint and mitotic G2 DNA damage checkpoint. Through its interaction with CDKN2A/ARF and MDM2 may induce MDM2-dependent p53/TP53 ubiquitination, stabilization and activation in the nucleus, thereby promoting G1 cell cycle arrest and inhibition of cell proliferation. May also play a role in the rupture of the nuclear envelope during apoptosis. May regulate MAPK14 activity by regulating its dephosphorylation by PPM1D/WIP1. Required for liver development. The polypeptide is CDK5 regulatory subunit-associated protein 3 (Rattus norvegicus (Rat)).